Here is a 324-residue protein sequence, read N- to C-terminus: Protoheme IX farnesyltransferase 2 (324 aa).

Transmembrane regions (helical) follow at residues 39 to 59 (LIKP…MLLA), 63 to 83 (IPSP…AGSA), 115 to 135 (HALV…WATT), 137 to 157 (LLSA…YTLV), 166 to 186 (IVWG…GVTG), 192 to 212 (ALVM…SLAM), 239 to 259 (IVVF…ATGW), 260 to 280 (LYTA…HRLH), and 302 to 322 (LMIV…VLGW).

It belongs to the UbiA prenyltransferase family. Protoheme IX farnesyltransferase subfamily.

It is found in the cell membrane. The enzyme catalyses heme b + (2E,6E)-farnesyl diphosphate + H2O = Fe(II)-heme o + diphosphate. Its pathway is porphyrin-containing compound metabolism; heme O biosynthesis; heme O from protoheme: step 1/1. Its function is as follows. Converts heme B (protoheme IX) to heme O by substitution of the vinyl group on carbon 2 of heme B porphyrin ring with a hydroxyethyl farnesyl side group. This is Protoheme IX farnesyltransferase 2 from Saccharopolyspora erythraea (strain ATCC 11635 / DSM 40517 / JCM 4748 / NBRC 13426 / NCIMB 8594 / NRRL 2338).